The primary structure comprises 285 residues: Transcription factor LBX1 (285 aa).

Positions 1 to 20 are enriched in basic and acidic residues; sequence MTSKEDGKAAPGEERRRSPL. The disordered stretch occupies residues 1 to 36; the sequence is MTSKEDGKAAPGEERRRSPLDHLPPPANSNKPLTPF. Residues 125–184 constitute a DNA-binding region (homeobox); the sequence is RRKSRTAFTNHQIYELEKRFLYQKYLSPADRDQIAQQLGLTNAQVITWFQNRRAKLKRDL. The interval 212–285 is disordered; the sequence is EQNSEASGGG…EEDEEIDVDD (74 aa). Residues 218–230 are compositionally biased toward gly residues; sequence SGGGGGGGGGGCG. A compositionally biased stretch (acidic residues) spans 272–285; it reads CSEDEEDEEIDVDD.

As to quaternary structure, interacts with SKOR1 which acts as a transcriptional corepressor.

It is found in the nucleus. Functionally, transcription factor required for the development of GABAergic interneurons in the dorsal horn of the spinal cord and migration and further development of hypaxial muscle precursor cells for limb muscles, diaphragm and hypoglossal cord. The polypeptide is Transcription factor LBX1 (Rattus norvegicus (Rat)).